The chain runs to 146 residues: Large ribosomal subunit protein uL15 (146 aa).

Residues 1 to 55 form a disordered region; sequence MGLRLNELSPGVGAKKTAQRRGRGIGSGLGKTGGRGVKGQKSRSGSSIRSGFEGG. A compositionally biased stretch (gly residues) spans 24–37; the sequence is GIGSGLGKTGGRGV.

Belongs to the universal ribosomal protein uL15 family. Part of the 50S ribosomal subunit.

Binds to the 23S rRNA. The chain is Large ribosomal subunit protein uL15 from Psychrobacter cryohalolentis (strain ATCC BAA-1226 / DSM 17306 / VKM B-2378 / K5).